The following is a 282-amino-acid chain: Putative sugar uptake protein lp_2594 (282 aa).

The next 10 membrane-spanning stretches (helical) occupy residues 2–21 (IFLIAIIPALCWGINPLLVG), 31–48 (MFGMGIGDGLIALIFWLF), 53–75 (VTISGVTFGLAMISGAAWAIGQL), 90–112 (MPISTALQLVGTSLIGVLMFGEW), 119–136 (ILGLLAIMLIVAGSALSA), 146–163 (FSCYLPLLMTTIGYWIYS), 176–194 (LFLPQMLGILIVAVGWAIY), 209–226 (TLPGILYGIAAFMYILSA), 233–252 (NAYIIGQLSVVISTLSGLFF), and 262–281 (IVSVATGLLFIFMGCVTTAL).

Belongs to the GRP transporter (TC 2.A.7.5) family.

Its subcellular location is the cell membrane. The polypeptide is Putative sugar uptake protein lp_2594 (Lactiplantibacillus plantarum (strain ATCC BAA-793 / NCIMB 8826 / WCFS1) (Lactobacillus plantarum)).